Consider the following 263-residue polypeptide: S-methyl-5'-thioadenosine phosphorylase (263 aa).

Phosphate is bound by residues Thr-13, 55 to 56 (RH), and 88 to 89 (SA). Met-186 lines the substrate pocket. Residue Thr-187 participates in phosphate binding. 210–212 (DYD) contacts substrate.

Belongs to the PNP/MTAP phosphorylase family. MTAP subfamily. In terms of assembly, homohexamer. Dimer of a homotrimer.

The enzyme catalyses S-methyl-5'-thioadenosine + phosphate = 5-(methylsulfanyl)-alpha-D-ribose 1-phosphate + adenine. It participates in amino-acid biosynthesis; L-methionine biosynthesis via salvage pathway; S-methyl-5-thio-alpha-D-ribose 1-phosphate from S-methyl-5'-thioadenosine (phosphorylase route): step 1/1. Functionally, catalyzes the reversible phosphorylation of S-methyl-5'-thioadenosine (MTA) to adenine and 5-methylthioribose-1-phosphate. Involved in the breakdown of MTA, a major by-product of polyamine biosynthesis. Responsible for the first step in the methionine salvage pathway after MTA has been generated from S-adenosylmethionine. Has broad substrate specificity with 6-aminopurine nucleosides as preferred substrates. The chain is S-methyl-5'-thioadenosine phosphorylase from Nitrosopumilus maritimus (strain SCM1).